The chain runs to 780 residues: Zinc finger protein GLIS3 (780 aa).

Polar residues-rich tracts occupy residues 80–92 (PSLSSSHSSQNGT) and 106–115 (VSGNSVSNSL). 2 disordered regions span residues 80-148 (PSLS…KKRA) and 290-315 (PSALPLPLPPPQGPPPPYHAHPHLHH). Over residues 135-148 (SATRAHSTRSKKRA) the composition is skewed to basic residues. Over residues 293–308 (LPLPLPPPQGPPPPYH) the composition is skewed to pro residues. Residues 345–370 (HCCRWIDCSALYDQQEELVRHIEKVH) form a C2H2-type 1 zinc finger. A C2H2-type 2; atypical zinc finger spans residues 379 to 406 (FTCFWTGCPRRYKPFNARYKLLIHMRVH). 3 consecutive C2H2-type zinc fingers follow at residues 412–436 (NKCTFEGCKKAFSRLENLKIHLRSH), 442–466 (YLCQHPGCQKAFSNSSDRAKHQRTH), and 472–496 (YACQIPGCTKRYTDPSSLRKHVKAH). 2 disordered regions span residues 485-512 (DPSSLRKHVKAHSSREQQARKKLRSSTE) and 527-670 (LQPA…QPNG). Positions 490–506 (RKHVKAHSSREQQARKK) match the Bipartite nuclear localization signal motif. Over residues 497–512 (SSREQQARKKLRSSTE) the composition is skewed to basic and acidic residues. Over residues 567–577 (HSTRSGTAAGA) the composition is skewed to low complexity. The segment covering 593–605 (VQGSPHNPSSQLP) has biased composition (polar residues).

Belongs to the GLI C2H2-type zinc-finger protein family. As to expression, in the embryo, expressed at high levels in the kidney and testis. In the adult, expressed at high levels in the kidney and uterus and at lower levels in the brain, lung, skeletal muscle and pancreas.

Its subcellular location is the nucleus. In terms of biological role, acts both as a repressor and activator of transcription. Binds to the consensus sequence 5'-GACCACCCAC-3'. The protein is Zinc finger protein GLIS3 of Mus musculus (Mouse).